A 500-amino-acid chain; its full sequence is Aspartyl/glutamyl-tRNA(Asn/Gln) amidotransferase subunit B (500 aa).

This sequence belongs to the GatB/GatE family. GatB subfamily. Heterotrimer of A, B and C subunits.

The catalysed reaction is L-glutamyl-tRNA(Gln) + L-glutamine + ATP + H2O = L-glutaminyl-tRNA(Gln) + L-glutamate + ADP + phosphate + H(+). The enzyme catalyses L-aspartyl-tRNA(Asn) + L-glutamine + ATP + H2O = L-asparaginyl-tRNA(Asn) + L-glutamate + ADP + phosphate + 2 H(+). In terms of biological role, allows the formation of correctly charged Asn-tRNA(Asn) or Gln-tRNA(Gln) through the transamidation of misacylated Asp-tRNA(Asn) or Glu-tRNA(Gln) in organisms which lack either or both of asparaginyl-tRNA or glutaminyl-tRNA synthetases. The reaction takes place in the presence of glutamine and ATP through an activated phospho-Asp-tRNA(Asn) or phospho-Glu-tRNA(Gln). This chain is Aspartyl/glutamyl-tRNA(Asn/Gln) amidotransferase subunit B, found in Brucella melitensis biotype 2 (strain ATCC 23457).